A 256-amino-acid polypeptide reads, in one-letter code: Protein YIPF7 (256 aa).

The Cytoplasmic portion of the chain corresponds to 1–125 (MSNLAQFDSD…VDGSIMNETD (125 aa)). Polar residues-rich tracts occupy residues 18-31 (IDNQ…SNAY) and 38-48 (RKQQAGEQPQP). Positions 18–48 (IDNQEQSGNDSNAYGNLYGSRKQQAGEQPQP) are disordered. A helical transmembrane segment spans residues 126–146 (LTGPILFCVALGATLLLAGKV). Residue Gln147 is a topological domain, extracellular. The chain crosses the membrane as a helical span at residues 148-168 (FGYVYGMSAIGCLVIHALLNL). Residues 169 to 172 (MSSS) are Cytoplasmic-facing. Residues 173 to 193 (GVSYGCVASVLGYCLLPMVIL) traverse the membrane as a helical segment. At 194 to 196 (SGC) the chain is on the extracellular side. A helical transmembrane segment spans residues 197–217 (AMFFSLQGIFGIMSSLVIIGW). Residues 218 to 235 (CSLSASKIFIAALHMEGQ) lie on the Cytoplasmic side of the membrane. The helical transmembrane segment at 236-256 (QLLVAYPCAILYGLFALLTIF) threads the bilayer.

It belongs to the YIP1 family.

The protein localises to the endoplasmic reticulum membrane. It is found in the golgi apparatus. It localises to the cis-Golgi network membrane. The protein resides in the trans-Golgi network membrane. In Homo sapiens (Human), this protein is Protein YIPF7 (YIPF7).